A 133-amino-acid chain; its full sequence is MEPFIGTWKMEKSEGFDKIMERLGVDYFTRKMGNMMKPNLIISDLGDGRYNMRSESKFKTSEFSFKLGEQFKEVTPDSREVMSMLTVEDGVLKQEQVGKDKTTYIDRVVYGNELRATVKADELVCVRTYSRGM.

Residues R107 and 127–129 contribute to the a fatty acid site; that span reads RTY.

This sequence belongs to the calycin superfamily. Fatty-acid binding protein (FABP) family.

May play a role in the acquisition, storage, and transport of lipids, and may be important to the organism since it is incapable of synthesizing most of its lipids de novo. The polypeptide is Fatty acid-binding protein homolog 2 (FABP2) (Echinococcus granulosus (Hydatid tapeworm)).